The chain runs to 122 residues: Large ribosomal subunit protein uL14c (122 aa).

The protein belongs to the universal ribosomal protein uL14 family. As to quaternary structure, part of the 50S ribosomal subunit.

The protein resides in the plastid. Its subcellular location is the chloroplast. Functionally, binds to 23S rRNA. This chain is Large ribosomal subunit protein uL14c, found in Jasminum nudiflorum (Winter jasmine).